A 130-amino-acid chain; its full sequence is MPTIQQLIRSARKKVSKKTKAPALKSCAQRRGICLRVYTVTPKKPNSALRKVARVRLTSGFEVTAYIPGIGHNLQEHAVVLVRGGRVKDLPGVRYHIVRGTLDTAGVKNRVQSRSKYGVKLAATKAAAKK.

This sequence belongs to the universal ribosomal protein uS12 family. As to quaternary structure, part of the 30S ribosomal subunit.

Its subcellular location is the plastid. It localises to the chloroplast. With S4 and S5 plays an important role in translational accuracy. Located at the interface of the 30S and 50S subunits. The polypeptide is Small ribosomal subunit protein uS12c (rps12) (Tetradesmus obliquus (Green alga)).